The primary structure comprises 761 residues: Proline-rich extensin-like protein EPR1 (761 aa).

The N-terminal stretch at 1 to 24 (MRVPLIDFLRFLVLILSLSGASVA) is a signal peptide. The 1; degenerate repeat unit spans residues 63 to 77 (YSPPIYPPPIQKPPT). A 40 X 17 AA approximate tandem repeats of Y-S-P-P-[IV]-[KY]-P-P-P-x(1,2)-K-P-P-T-P-T region spans residues 63 to 735 (YSPPIYPPPI…PPVQVPPTPT (673 aa)). 39 consecutive repeat copies span residues 78-94 (YSPP…PTPT), 95-111 (YSPP…PTPT), 112-128 (YSPP…PTPT), 129-145 (YSPP…PTPS), 146-162 (YSPP…PTPT), 163-179 (YSPP…PTPT), 180-195 (YSPP…PTPI), 196-212 (YSPP…PTPI), 213-229 (YSPP…PTPT), 230-246 (YSPP…PTPI), 247-263 (YSPP…PTPI), 264-280 (YSPP…PTPI), 281-297 (YSPP…PTPT), 298-314 (YSPP…PTPT), 315-331 (YSPP…PTPT), 332-347 (YSPP…PTPI), 348-364 (YSPP…PTPI), 365-381 (YSPP…PTPI), 382-398 (YSPP…PTPT), 399-415 (YSPP…PTPT), 416-431 (YSPP…PTPI), 432-448 (YSPP…PTPI), 449-465 (YSPP…PTPT), 466-481 (YSPP…PTPT), 482-498 (YSPP…PTPT), 499-515 (YSPP…PTPT), 516-531 (YSPP…PTPT), 532-548 (YSPP…PTPT), 549-565 (YSPP…PTPT), 566-582 (YSPP…PTPT), 583-599 (YSPP…PTPT), 600-616 (YSPP…PTPT), 617-633 (YSPP…PTPT), 634-650 (YSPP…PTPT), 651-667 (YSPP…PTPT), 668-684 (YSPP…PTPT), 685-701 (YSPP…PTPT), 702-718 (YSPP…PTPT), and 719-735 (YSPP…PTPT). Residues 111-750 (TYSPPIYPPP…QGGYGTPPPY (640 aa)) are compositionally biased toward pro residues. The tract at residues 111–761 (TYSPPIYPPP…YLSHPIDIRN (651 aa)) is disordered.

This sequence belongs to the extensin family. In terms of tissue distribution, specifically expressed in endosperm during seed germination, at the site of radicle protrusion.

Its subcellular location is the secreted. It is found in the primary cell wall. May have a specific role in modifying the cell-wall structure, specifically during seed germination, thus facilitating radicle protrusion. The sequence is that of Proline-rich extensin-like protein EPR1 (EPR1) from Arabidopsis thaliana (Mouse-ear cress).